Here is a 308-residue protein sequence, read N- to C-terminus: Mycothiol acetyltransferase (308 aa).

The segment at 1 to 20 (MTSDDTAQPSGARRIETRPD) is disordered. N-acetyltransferase domains lie at 15-152 (IETR…RSLT) and 165-308 (VTVR…RSET). Residue Glu-47 participates in 1D-myo-inositol 2-(L-cysteinylamino)-2-deoxy-alpha-D-glucopyranoside binding. 91–93 (LVV) is a binding site for acetyl-CoA. Residues Glu-192, Lys-231, and Glu-240 each contribute to the 1D-myo-inositol 2-(L-cysteinylamino)-2-deoxy-alpha-D-glucopyranoside site. Acetyl-CoA is bound by residues 244–246 (VGV) and 251–257 (QGGGLGK). Residue Tyr-278 coordinates 1D-myo-inositol 2-(L-cysteinylamino)-2-deoxy-alpha-D-glucopyranoside.

This sequence belongs to the acetyltransferase family. MshD subfamily. Monomer.

The catalysed reaction is 1D-myo-inositol 2-(L-cysteinylamino)-2-deoxy-alpha-D-glucopyranoside + acetyl-CoA = mycothiol + CoA + H(+). Functionally, catalyzes the transfer of acetyl from acetyl-CoA to desacetylmycothiol (Cys-GlcN-Ins) to form mycothiol. This is Mycothiol acetyltransferase from Streptomyces scabiei (strain 87.22).